The following is a 562-amino-acid chain: MDDNKRPLYLPFAGPAILEAPLINKGSAFSEEERIFFNLEGLVPYAIETIEEQASRAYDQFRSFNNDLDKHIYLRNIQDTNETLFYRLVQNNISEMMPIIYTPTVGLACERFSKNYRRNRGLFISYPNKDRIDDILNNSTRQKVKIIVVTDGERILGLGDQGIGGMGIPIGKLSLYTSCGGISPAYTLPITLDVGTDNPQLLEDPMYMGWRHPRIGGEEYAEFIEAFMQAVHVRWPDTLIQFEDFAQKNAMPILERYKDRYCCFNDDIQGTAAVAVGSLLAACKAAGTELNQQRIAFLGAGSAGCGIAEAIVAQMVSEGISDEQARTQVCMVDRWGLLLDNMPNLLPFQQKLAQKCTNIQNWSNFSDNISLLDVVNNTKPTVLIGVSGVPGLFTEEIIRAMHSHCARPIIFPLSNPTSRVEATPKDILHWTSGQALVATGSPFEPVVVDGETFEIAQCNNSFIFPGIGLGVLASGARHVSDAMLMASSRALAECSPLAIDGSGPLLPKLEDIHAVSKHIAFAVGKVAVEQGLTLPMSDEILQQSIEGNFWSPEYRRYKRTSF.

Residue Y101 is the Proton donor of the active site. Position 154 (R154) interacts with NAD(+). K172 serves as the catalytic Proton acceptor. The a divalent metal cation site is built by E243, D244, and D267. Residues D267 and N415 each contribute to the NAD(+) site.

This sequence belongs to the malic enzymes family. Homotetramer. Requires Mg(2+) as cofactor. Mn(2+) is required as a cofactor.

The enzyme catalyses (S)-malate + NAD(+) = pyruvate + CO2 + NADH. It carries out the reaction oxaloacetate + H(+) = pyruvate + CO2. This chain is NAD-dependent malic enzyme, found in Shewanella baltica (strain OS223).